Here is a 428-residue protein sequence, read N- to C-terminus: Glutamyl-tRNA reductase (428 aa).

Residues threonine 49–arginine 52, serine 107, glutamate 112–glutamine 114, and glutamine 118 contribute to the substrate site. Cysteine 50 functions as the Nucleophile in the catalytic mechanism. Residue glycine 187–isoleucine 192 participates in NADP(+) binding.

The protein belongs to the glutamyl-tRNA reductase family. Homodimer.

It carries out the reaction (S)-4-amino-5-oxopentanoate + tRNA(Glu) + NADP(+) = L-glutamyl-tRNA(Glu) + NADPH + H(+). It functions in the pathway porphyrin-containing compound metabolism; protoporphyrin-IX biosynthesis; 5-aminolevulinate from L-glutamyl-tRNA(Glu): step 1/2. In terms of biological role, catalyzes the NADPH-dependent reduction of glutamyl-tRNA(Glu) to glutamate 1-semialdehyde (GSA). This Pseudomonas fluorescens (strain Pf0-1) protein is Glutamyl-tRNA reductase.